Consider the following 169-residue polypeptide: Crossover junction endodeoxyribonuclease RuvC (169 aa).

Catalysis depends on residues Asp-11, Glu-71, and Asp-143. Mg(2+) contacts are provided by Asp-11, Glu-71, and Asp-143.

Belongs to the RuvC family. In terms of assembly, homodimer which binds Holliday junction (HJ) DNA. The HJ becomes 2-fold symmetrical on binding to RuvC with unstacked arms; it has a different conformation from HJ DNA in complex with RuvA. In the full resolvosome a probable DNA-RuvA(4)-RuvB(12)-RuvC(2) complex forms which resolves the HJ. Requires Mg(2+) as cofactor.

It is found in the cytoplasm. The enzyme catalyses Endonucleolytic cleavage at a junction such as a reciprocal single-stranded crossover between two homologous DNA duplexes (Holliday junction).. The RuvA-RuvB-RuvC complex processes Holliday junction (HJ) DNA during genetic recombination and DNA repair. Endonuclease that resolves HJ intermediates. Cleaves cruciform DNA by making single-stranded nicks across the HJ at symmetrical positions within the homologous arms, yielding a 5'-phosphate and a 3'-hydroxyl group; requires a central core of homology in the junction. The consensus cleavage sequence is 5'-(A/T)TT(C/G)-3'. Cleavage occurs on the 3'-side of the TT dinucleotide at the point of strand exchange. HJ branch migration catalyzed by RuvA-RuvB allows RuvC to scan DNA until it finds its consensus sequence, where it cleaves and resolves the cruciform DNA. The sequence is that of Crossover junction endodeoxyribonuclease RuvC from Allorhizobium ampelinum (strain ATCC BAA-846 / DSM 112012 / S4) (Agrobacterium vitis (strain S4)).